Reading from the N-terminus, the 1276-residue chain is Probable histone acetyltransferase HAC-like 3 (1276 aa).

The segment at 391-421 (VDRAEQTSNSTVSKPTSPASDGSSGKHYPAK) is disordered. Over residues 396-413 (QTSNSTVSKPTSPASDGS) the composition is skewed to polar residues. A PHD-type zinc finger spans residues 621–689 (SSICGRCHHL…EYTCAKCFLK (69 aa)). Positions 704–1130 (ILGARELPRT…ILYHLHDSTC (427 aa)) constitute a CBP/p300-type HAT domain. Acetyl-CoA-binding positions include 827–829 (IDS), 846–847 (RT), and Trp-902. Residues 953 to 973 (EAERLLEKKDDDTSQKKETQL) adopt a coiled-coil conformation. 2 consecutive ZZ-type zinc fingers follow at residues 1013 to 1076 (CLQQ…EEPL) and 1125 to 1187 (LHDS…LQDY). Residues Cys-1018, Cys-1021, Cys-1033, Cys-1036, Cys-1042, Cys-1045, His-1058, His-1066, Cys-1130, Cys-1133, Cys-1145, Cys-1148, Cys-1154, Cys-1157, His-1168, and His-1177 each coordinate Zn(2+). The segment at 1177–1260 (HVLQKYTLQD…DCSAPRCRDI (84 aa)) adopts a TAZ-type zinc-finger fold.

The protein resides in the nucleus. It carries out the reaction L-lysyl-[protein] + acetyl-CoA = N(6)-acetyl-L-lysyl-[protein] + CoA + H(+). Functionally, acetyltransferase enzyme. Acetylates histones, giving a specific tag for transcriptional activation. The chain is Probable histone acetyltransferase HAC-like 3 from Oryza sativa subsp. japonica (Rice).